The following is a 373-amino-acid chain: Chaperone protein DnaJ (373 aa).

Positions 4-68 constitute a J domain; that stretch reads NYYQILGVSK…QKRAAYDRLG (65 aa). The segment at 136 to 214 adopts a CR-type zinc-finger fold; that stretch reads GIEKNINFSS…CHGMGRYHKQ (79 aa). Zn(2+)-binding residues include Cys149, Cys152, Cys166, Cys169, Cys188, Cys191, Cys202, and Cys205. CXXCXGXG motif repeat units follow at residues 149–156, 166–173, 188–195, and 202–209; these read CNTCHGSG, CDACSGVG, CHKCQGNG, and CKKCHGMG.

It belongs to the DnaJ family. As to quaternary structure, homodimer. Zn(2+) is required as a cofactor.

It is found in the cytoplasm. Participates actively in the response to hyperosmotic and heat shock by preventing the aggregation of stress-denatured proteins and by disaggregating proteins, also in an autonomous, DnaK-independent fashion. Unfolded proteins bind initially to DnaJ; upon interaction with the DnaJ-bound protein, DnaK hydrolyzes its bound ATP, resulting in the formation of a stable complex. GrpE releases ADP from DnaK; ATP binding to DnaK triggers the release of the substrate protein, thus completing the reaction cycle. Several rounds of ATP-dependent interactions between DnaJ, DnaK and GrpE are required for fully efficient folding. Also involved, together with DnaK and GrpE, in the DNA replication of plasmids through activation of initiation proteins. The protein is Chaperone protein DnaJ of Rickettsia rickettsii (strain Sheila Smith).